A 142-amino-acid polypeptide reads, in one-letter code: Putative pre-16S rRNA nuclease (142 aa).

The protein belongs to the YqgF nuclease family.

The protein localises to the cytoplasm. In terms of biological role, could be a nuclease involved in processing of the 5'-end of pre-16S rRNA. The polypeptide is Putative pre-16S rRNA nuclease (Staphylococcus aureus (strain bovine RF122 / ET3-1)).